We begin with the raw amino-acid sequence, 168 residues long: 3-dehydroquinate dehydratase (168 aa).

The Proton acceptor role is filled by tyrosine 22. Residues asparagine 76, histidine 82, and aspartate 89 each contribute to the substrate site. Histidine 102 functions as the Proton donor in the catalytic mechanism. Substrate-binding positions include 103 to 104 and arginine 113; that span reads LT.

This sequence belongs to the type-II 3-dehydroquinase family. As to quaternary structure, homododecamer.

The catalysed reaction is 3-dehydroquinate = 3-dehydroshikimate + H2O. It functions in the pathway metabolic intermediate biosynthesis; chorismate biosynthesis; chorismate from D-erythrose 4-phosphate and phosphoenolpyruvate: step 3/7. In terms of biological role, catalyzes a trans-dehydration via an enolate intermediate. In Helicobacter acinonychis (strain Sheeba), this protein is 3-dehydroquinate dehydratase.